A 350-amino-acid chain; its full sequence is Small ribosomal subunit biogenesis GTPase RsgA (350 aa).

Residues 1–17 (MSKNKLSKGQQRRVNAN) are compositionally biased toward polar residues. A disordered region spans residues 1 to 33 (MSKNKLSKGQQRRVNANHQRRLKTSKEKPDYDD). The region spanning 104–273 (TSVLTRPDFY…VIDSPGVREF (170 aa)) is the CP-type G domain. GTP is bound by residues 160 to 163 (NKID) and 214 to 222 (GQSGVGKSS). 4 residues coordinate Zn(2+): C297, C302, H304, and C310.

This sequence belongs to the TRAFAC class YlqF/YawG GTPase family. RsgA subfamily. Monomer. Associates with 30S ribosomal subunit, binds 16S rRNA. Zn(2+) serves as cofactor.

It is found in the cytoplasm. Its function is as follows. One of several proteins that assist in the late maturation steps of the functional core of the 30S ribosomal subunit. Helps release RbfA from mature subunits. May play a role in the assembly of ribosomal proteins into the subunit. Circularly permuted GTPase that catalyzes slow GTP hydrolysis, GTPase activity is stimulated by the 30S ribosomal subunit. The polypeptide is Small ribosomal subunit biogenesis GTPase RsgA (Shigella boydii serotype 18 (strain CDC 3083-94 / BS512)).